The chain runs to 433 residues: Phosphoribosylamine--glycine ligase (433 aa).

Positions 111-317 constitute an ATP-grasp domain; sequence EFMARNNIKG…FVDICEAIVD (207 aa). 138 to 194 is an ATP binding site; the sequence is EDNPDVVVKPAGLTGGKGVKVMGEHMHTLEEAREYVKSVLEHDRVVIEERLKGEEVT. Mg(2+)-binding residues include Gln275, Glu287, and Asn289. Mn(2+) contacts are provided by Gln275, Glu287, and Asn289.

Belongs to the GARS family. Requires Mg(2+) as cofactor. The cofactor is Mn(2+).

It catalyses the reaction 5-phospho-beta-D-ribosylamine + glycine + ATP = N(1)-(5-phospho-beta-D-ribosyl)glycinamide + ADP + phosphate + H(+). The protein operates within purine metabolism; IMP biosynthesis via de novo pathway; N(1)-(5-phospho-D-ribosyl)glycinamide from 5-phospho-alpha-D-ribose 1-diphosphate: step 2/2. In Methanocella arvoryzae (strain DSM 22066 / NBRC 105507 / MRE50), this protein is Phosphoribosylamine--glycine ligase.